The primary structure comprises 226 residues: V-type proton ATPase subunit E 1 (226 aa).

The residue at position 2 (alanine 2) is an N-acetylalanine. Residue tyrosine 56 is modified to Phosphotyrosine.

It belongs to the V-ATPase E subunit family. V-ATPase is a heteromultimeric enzyme made up of two complexes: the ATP-hydrolytic V1 complex and the proton translocation V0 complex. The V1 complex consists of three catalytic AB heterodimers that form a heterohexamer, three peripheral stalks each consisting of EG heterodimers, one central rotor including subunits D and F, and the regulatory subunits C and H. The proton translocation complex V0 consists of the proton transport subunit a, a ring of proteolipid subunits c9c'', rotary subunit d, subunits e and f, and the accessory subunits ATP6AP1/Ac45 and ATP6AP2/PRR. Interacts with RABL2/RABL2A; binds preferentially to GTP-bound RABL2. Interacts with ALDOC. Interacts with RAB11B. In terms of tissue distribution, kidney; localizes to early distal nephron, encompassing thick ascending limbs and distal convoluted tubules (at protein level). Ubiquitous. High expression in the skin.

The protein resides in the apical cell membrane. The protein localises to the cytoplasmic vesicle. It is found in the secretory vesicle. Its subcellular location is the synaptic vesicle membrane. It localises to the clathrin-coated vesicle membrane. Functionally, subunit of the V1 complex of vacuolar(H+)-ATPase (V-ATPase), a multisubunit enzyme composed of a peripheral complex (V1) that hydrolyzes ATP and a membrane integral complex (V0) that translocates protons. V-ATPase is responsible for acidifying and maintaining the pH of intracellular compartments and in some cell types, is targeted to the plasma membrane, where it is responsible for acidifying the extracellular environment. The chain is V-type proton ATPase subunit E 1 (ATP6V1E1) from Homo sapiens (Human).